The chain runs to 299 residues: NAD kinase (299 aa).

The active-site Proton acceptor is Asp-71. Residues 71–72 (DG), 145–146 (ND), Arg-173, Asp-175, 186–191 (TAYSLS), Ala-210, and Gln-248 contribute to the NAD(+) site.

This sequence belongs to the NAD kinase family. Requires a divalent metal cation as cofactor.

It localises to the cytoplasm. It carries out the reaction NAD(+) + ATP = ADP + NADP(+) + H(+). In terms of biological role, involved in the regulation of the intracellular balance of NAD and NADP, and is a key enzyme in the biosynthesis of NADP. Catalyzes specifically the phosphorylation on 2'-hydroxyl of the adenosine moiety of NAD to yield NADP. This Bordetella pertussis (strain Tohama I / ATCC BAA-589 / NCTC 13251) protein is NAD kinase.